A 246-amino-acid polypeptide reads, in one-letter code: 1-(5-phosphoribosyl)-5-[(5-phosphoribosylamino)methylideneamino] imidazole-4-carboxamide isomerase (246 aa).

Aspartate 12 serves as the catalytic Proton acceptor. The active-site Proton donor is the aspartate 134.

It belongs to the HisA/HisF family.

It is found in the cytoplasm. It carries out the reaction 1-(5-phospho-beta-D-ribosyl)-5-[(5-phospho-beta-D-ribosylamino)methylideneamino]imidazole-4-carboxamide = 5-[(5-phospho-1-deoxy-D-ribulos-1-ylimino)methylamino]-1-(5-phospho-beta-D-ribosyl)imidazole-4-carboxamide. Its pathway is amino-acid biosynthesis; L-histidine biosynthesis; L-histidine from 5-phospho-alpha-D-ribose 1-diphosphate: step 4/9. The sequence is that of 1-(5-phosphoribosyl)-5-[(5-phosphoribosylamino)methylideneamino] imidazole-4-carboxamide isomerase from Psychrobacter cryohalolentis (strain ATCC BAA-1226 / DSM 17306 / VKM B-2378 / K5).